Consider the following 999-residue polypeptide: Cytoplasmic dynein 2 intermediate chain 1 (999 aa).

Basic and acidic residues-rich tracts occupy residues 1–19 (MEPG…DDLR), 29–138 (PKEE…EEIR), 146–260 (LLSR…EDRH), and 268–300 (GLHY…KELE). The disordered stretch occupies residues 1-350 (MEPGKRRTKD…EHEAREKAEE (350 aa)). Phosphoserine is present on S250. Residues 318 to 338 (LEDDFVDYEDDFEVCDGDDDS) show a composition bias toward acidic residues. Over residues 339–350 (NNEHEAREKAEE) the composition is skewed to basic and acidic residues. Positions 416–495 (ASHRQKSRSQ…DIQTEDIETR (80 aa)) are binding to the DYNLT2B-DYNLT1/DYNLT3 dimer. WD repeat units follow at residues 637–677 (ICES…RIHH), 718–764 (AYKK…KADI), 850–890 (VRPI…PIMQ), and 895–935 (TSGH…LGPV).

It belongs to the dynein light intermediate chain family. In terms of assembly, intermediate chain of the cytoplasmic dynein complex 2, a multisubunit complex, composed at least of eleven different proteins. The cytoplasmic dynein 2 complex consists of two catalytic heavy chains (HCs) and a number of non-catalytic subunits presented by intermediate chains (ICs), light intermediate chains (LICs) and light chains (LCs). Among them, a heavy chain (DYNC2H1), two intermediate chains (DYNC2I2 and DYNC2I1), a light intermediate chain (DYNC2LI1), and a light chain (DYNLT2B) are unique to the cytoplasmic dynein complex 2, but a subset of the light chains are also shared by dynein-1 and dynein-2 complexes. Interacts with DYNC2I2; their C-terminal domains each bind a copy of the heavy chain, and their extended N-terminal regions are held together by an array of light chain dimers. Interacts with DYNLT2B. Interacts (via the N-terminal half) with DYNLT2B-DYNLT1 dimer or with DYNLT2B-DYNLT3 dimer; this interaction is crucial for retrograde trafficking of ciliary proteins.

It localises to the cell projection. It is found in the cilium. The protein localises to the cytoplasm. Its subcellular location is the cytoskeleton. The protein resides in the microtubule organizing center. It localises to the centrosome. Acts as one of several non-catalytic accessory components of the cytoplasmic dynein 2 complex (dynein-2 complex), a motor protein complex that drives the movement of cargos along microtubules within cilia and flagella in concert with the intraflagellar transport (IFT) system. DYNC2I1 plays a major role in retrograde ciliary protein trafficking in cilia and flagella. Also requires to maintain a functional transition zone. The chain is Cytoplasmic dynein 2 intermediate chain 1 (Dync2i1) from Mus musculus (Mouse).